The primary structure comprises 222 residues: Thiol:disulfide interchange protein DsbL (222 aa).

The first 27 residues, 1–27 (MSAKWINSIFKSVVLTAALALPFTASA), serve as a signal peptide directing secretion. The region spanning 28-221 (FTEGTDYMVL…MAQLVRELAT (194 aa)) is the Thioredoxin domain. Cys-56 and Cys-59 form a disulfide bridge.

This sequence belongs to the thioredoxin family. DsbL subfamily. As to quaternary structure, interacts with DsbI.

The protein localises to the periplasm. Involved in disulfide-bond formation. Acts by transferring its disulfide bond to other proteins. Part of a redox system composed of DsbI and DsbL that mediates formation of an essential disulfide bond in AssT. In Lelliottia amnigena (Enterobacter amnigenus), this protein is Thiol:disulfide interchange protein DsbL.